We begin with the raw amino-acid sequence, 780 residues long: Cullin-5 (780 aa).

Ser34 is subject to Phosphoserine. Phosphothreonine is present on Thr210. In terms of domain architecture, Cullin neddylation spans 711–772; the sequence is RILRTQEAII…HKYIRRDEAD (62 aa). Lys724 is covalently cross-linked (Glycyl lysine isopeptide (Lys-Gly) (interchain with G-Cter in NEDD8)).

It belongs to the cullin family. As to quaternary structure, component of multiple cullin-5-RING E3 ubiquitin-protein ligase complexes (ECS complexes, also named CRL5 complexes) formed of CUL5, Elongin BC (ELOB and ELOC), RNF7/RBX2 and a variable SOCS box domain-containing protein as substrate-specific recognition component. CUL5-containing ECS complexes specifically contain RNF7/RBX2, and not RBX1, as catalytic subunit. Component of the ECS(ASB2) complex with the substrate recognition component ASB2. Component of the ECS(ASB6) complex with the substrate recognition component ASB6. Component of the ECS(ASB7) complex with the substrate recognition component ASB7. Component of the ECS(ASB9) complex with the substrate recognition component ASB9. Component of the ECS(ASB11) complex with the substrate recognition component ASB11. Component of the ECS(ASB12) complex with the substrate recognition component ASB12. Component of the ECS(LRRC41) complex with the substrate recognition component LRRC41. Component of the ECS(SOCS1) complex with the substrate recognition component SOCS1. Component of the ECS(SOCS2) complex with the substrate recognition component SOCS2. Component of the ECS(WSB1) complex with the substrate recognition subunit WSB1. Component of the ECS(SOCS3) complex with the substrate recognition component SOCS3. Component of the ECS(SOCS7) complex with the substrate recognition component SOCS7. Component of the ECS(SPSB1) complex with the substrate recognition component SPSB1. Component of the ECS(SPSB3) complex with the substrate recognition component SPSB3. Component of the ECS(SPSB2) complex with the substrate recognition component SPSB2. Component of the ECS(SPSB4) complex with the substrate recognition component SPSB4. Component of the ECS(RAB40) complex with the substrate recognition subunit RAB40A, RAB40B or RAB40C. Component of the ECS(KLHDC1) complex with the substrate recognition component KLHDC1. Component of the ECS(PCMTD1) complex with the substrate recognition subunit PCMTD1. May also form complexes containing RBX1 and ELOA or VHL; additional evidence is however required to confirm this result in vivo. Interacts (when neddylated) with ARIH2; leading to activate the E3 ligase activity of ARIH2. Interacts with ERCC6; the interaction is induced by DNA damaging agents or inhibitors of RNA polymerase II elongation. Interacts with ELOA (via the BC-box). Interacts (unneddylated form) with DCUN1D1, DCUN1D2, DCUN1D3, DCUN1D4 and DCUN1D5; these interactions promote the cullin neddylation. Neddylated; which enhances the ubiquitination activity of ECS complexes and prevents binding of the inhibitor CAND1. Deneddylated via its interaction with the COP9 signalosome (CSN).

It is found in the nucleus. It functions in the pathway protein modification; protein ubiquitination. Functionally, core component of multiple cullin-5-RING E3 ubiquitin-protein ligase complexes (ECS complexes, also named CRL5 complexes), which mediate the ubiquitination and subsequent proteasomal degradation of target proteins. Acts a scaffold protein that contributes to catalysis through positioning of the substrate and the ubiquitin-conjugating enzyme. The functional specificity of the E3 ubiquitin-protein ligase complex depends on the variable SOCS box-containing substrate recognition component. Acts as a key regulator of neuron positioning during cortex development: component of various SOCS-containing ECS complexes, such as the ECS(SOCS7) complex, that regulate reelin signaling by mediating ubiquitination and degradation of DAB1. ECS(SOCS1) seems to direct ubiquitination of JAK2. The ECS(SOCS2) complex mediates the ubiquitination and subsequent proteasomal degradation of phosphorylated EPOR and GHR. The ECS(SPSB3) complex catalyzes ubiquitination of nuclear CGAS. ECS(KLHDC1) complex is part of the DesCEND (destruction via C-end degrons) pathway and mediates ubiquitination and degradation of truncated SELENOS selenoprotein produced by failed UGA/Sec decoding, which ends with a glycine. The ECS(ASB9) complex mediates ubiquitination and degradation of CKB. As part of some ECS complex, promotes 'Lys-11'-linked ubiquitination and degradation of BTRC. As part of a multisubunit ECS complex, polyubiquitinates monoubiquitinated POLR2A. As part of the ECS(RAB40C) complex, mediates ANKRD28 ubiquitination and degradation, thereby regulating protein phosphatase 6 (PP6) complex activity and focal adhesion assembly during cell migration. As part of the ECS(RAB40A) complex, mediates RHOU 'Lys-48'-linked ubiquitination and degradation, thus inhibiting focal adhesion disassembly during cell migration. As part of the ECS(RAB40B) complex, mediates LIMA1/EPLIN and RAP2 ubiquitination, thereby regulating actin cytoskeleton dynamics and stress fiber formation during cell migration. May form a cell surface vasopressin receptor. This Rattus norvegicus (Rat) protein is Cullin-5.